A 258-amino-acid polypeptide reads, in one-letter code: Phosphoribosylaminoimidazole-succinocarboxamide synthase (258 aa).

The protein belongs to the SAICAR synthetase family.

The enzyme catalyses 5-amino-1-(5-phospho-D-ribosyl)imidazole-4-carboxylate + L-aspartate + ATP = (2S)-2-[5-amino-1-(5-phospho-beta-D-ribosyl)imidazole-4-carboxamido]succinate + ADP + phosphate + 2 H(+). Its pathway is purine metabolism; IMP biosynthesis via de novo pathway; 5-amino-1-(5-phospho-D-ribosyl)imidazole-4-carboxamide from 5-amino-1-(5-phospho-D-ribosyl)imidazole-4-carboxylate: step 1/2. The protein is Phosphoribosylaminoimidazole-succinocarboxamide synthase of Rhizorhabdus wittichii (strain DSM 6014 / CCUG 31198 / JCM 15750 / NBRC 105917 / EY 4224 / RW1) (Sphingomonas wittichii).